The chain runs to 34 residues: uncharacterized protein (34 aa).

Residues 1–34 form a disordered region; the sequence is MRLRRLFKQPSTRVLGVTNCPRQQGHQKRREQPD. Basic residues predominate over residues 25-34; that stretch reads GHQKRREQPD.

This is an uncharacterized protein from Schizosaccharomyces pombe (strain 972 / ATCC 24843) (Fission yeast).